Reading from the N-terminus, the 483-residue chain is Glutamate--tRNA ligase (483 aa).

The 'HIGH' region motif lies at 9-19 (PSPTGYLHIGN). Positions 250–254 (KLSKR) match the 'KMSKS' region motif. Lysine 253 lines the ATP pocket.

This sequence belongs to the class-I aminoacyl-tRNA synthetase family. Glutamate--tRNA ligase type 1 subfamily. Monomer.

It localises to the cytoplasm. The enzyme catalyses tRNA(Glu) + L-glutamate + ATP = L-glutamyl-tRNA(Glu) + AMP + diphosphate. Functionally, catalyzes the attachment of glutamate to tRNA(Glu) in a two-step reaction: glutamate is first activated by ATP to form Glu-AMP and then transferred to the acceptor end of tRNA(Glu). The chain is Glutamate--tRNA ligase from Blochmanniella floridana.